A 129-amino-acid chain; its full sequence is Tumor necrosis factor receptor superfamily member 12A (129 aa).

A signal peptide spans 1-27 (MARGSLRRLLRLLVLGLWLALLRSVAG). Residues 28–80 (EQAPGTAPCSRGSSWSADLDKCMDCASCRARPHSDFCLGCAAAPPAPFRLLWP) are Extracellular-facing. Intrachain disulfides connect Cys36–Cys49, Cys52–Cys67, and Cys55–Cys64. The stretch at 36 to 67 (CSRGSSWSADLDKCMDCASCRARPHSDFCLGC) is one TNFR-Cys; atypical repeat. The chain crosses the membrane as a helical span at residues 81-101 (ILGGALSLTFVLGLLSGFLVW). Residues 102–129 (RRCRRREKFTTPIEETGGEGCPAVALIQ) are Cytoplasmic-facing.

In terms of assembly, associates with TRAF1 and TRAF2, and probably also with TRAF3. Highly expressed in heart, placenta and kidney. Intermediate expression in lung, skeletal muscle and pancreas.

The protein localises to the membrane. Its function is as follows. Receptor for TNFSF12/TWEAK. Weak inducer of apoptosis in some cell types. Promotes angiogenesis and the proliferation of endothelial cells. May modulate cellular adhesion to matrix proteins. This is Tumor necrosis factor receptor superfamily member 12A (TNFRSF12A) from Homo sapiens (Human).